A 173-amino-acid chain; its full sequence is Large ribosomal subunit protein bL9 (173 aa).

Belongs to the bacterial ribosomal protein bL9 family.

Its function is as follows. Binds to the 23S rRNA. The sequence is that of Large ribosomal subunit protein bL9 from Chlamydia felis (strain Fe/C-56) (Chlamydophila felis).